A 139-amino-acid polypeptide reads, in one-letter code: ATP synthase epsilon chain (139 aa).

Belongs to the ATPase epsilon chain family. As to quaternary structure, F-type ATPases have 2 components, CF(1) - the catalytic core - and CF(0) - the membrane proton channel. CF(1) has five subunits: alpha(3), beta(3), gamma(1), delta(1), epsilon(1). CF(0) has three main subunits: a, b and c.

The protein localises to the cell inner membrane. Functionally, produces ATP from ADP in the presence of a proton gradient across the membrane. This chain is ATP synthase epsilon chain, found in Escherichia coli O139:H28 (strain E24377A / ETEC).